The following is a 42-amino-acid chain: Photosystem I reaction center subunit IX (42 aa).

The helical transmembrane segment at 7 to 27 (YLSTAPVLAAIWFGILAGLLI) threads the bilayer.

This sequence belongs to the PsaJ family.

The protein localises to the plastid. Its subcellular location is the chloroplast thylakoid membrane. Functionally, may help in the organization of the PsaE and PsaF subunits. The sequence is that of Photosystem I reaction center subunit IX from Staurastrum punctulatum (Green alga).